The following is a 1846-amino-acid chain: Brefeldin A-inhibited guanine nucleotide-exchange protein 1 (1846 aa).

A DCB; DCB:DCB domain and DCB:HUS domain interaction region spans residues 2–224 (YEGKKTKNMF…QEAKQMERER (223 aa)). Residue Ser-52 is modified to Phosphoserine. Disordered regions lie at residues 216–249 (EAKQ…LRYL), 264–304 (DLEP…ATAA), and 347–410 (ISAS…SPGA). Residues 264–277 (DLEPQTHDVDKSLQ) are compositionally biased toward basic and acidic residues. A phosphoserine mark is found at Ser-286, Ser-289, and Ser-290. 2 stretches are compositionally biased toward polar residues: residues 348–357 (SASTEGNTGT) and 391–406 (SVSS…SSGP). Phosphoserine is present on residues Ser-394 and Ser-407. Residues 554 to 574 (ADAQSVVDIYVNYDCDLNAAN) are HUS; DCB:HUS domain interaction. Positions 631–684 (PNSQTTLGQEKPSEQEISEVKHPETINRYGSLNSLESTSSSGIGSYSTQMSGTD) are disordered. The segment covering 641–655 (KPSEQEISEVKHPET) has biased composition (basic and acidic residues). A compositionally biased stretch (low complexity) spans 661-681 (SLNSLESTSSSGIGSYSTQMS). Residues 688-877 (QFEVLKQQKE…SAIYNEIAGK (190 aa)) enclose the SEC7 domain. Residues 708–712 (KKPKR) carry the Nuclear localization signal (NLS) motif. Phosphoserine occurs at positions 1076, 1563, and 1566.

As to quaternary structure, homodimer. Interacts with ARFGEF2/BIG2; both proteins are probably part of the same or very similar macromolecular complexes. Interacts with FKBP2. Interacts with MYO9B. Interacts with PRKAR1A and PRKAR2A. Interacts with PPP1CC. Interacts with NCL, FBL, NUP62 and U3 small nucleolar RNA. Interacts with DPY30. Interacts with PDE3A. Interacts with KANK1. Interacts with TBC1D22A and TBC1D22B. In terms of processing, phosphorylated. In vitro phosphorylated by PKA reducing its GEF activity and dephosphorylated by phosphatase PP1.

The protein resides in the cytoplasm. The protein localises to the perinuclear region. It is found in the golgi apparatus. Its subcellular location is the trans-Golgi network. It localises to the nucleus. The protein resides in the nucleolus. The protein localises to the nucleus matrix. It is found in the membrane. Inhibited by brefeldin A. Functionally, promotes guanine-nucleotide exchange on ARF1 and ARF3. Promotes the activation of ARF1/ARF3 through replacement of GDP with GTP. Involved in vesicular trafficking. Required for the maintenance of Golgi structure; the function may be independent of its GEF activity. Required for the maturation of integrin beta-1 in the Golgi. Involved in the establishment and persistence of cell polarity during directed cell movement in wound healing. Proposed to act as A kinase-anchoring protein (AKAP) and may mediate crosstalk between Arf and PKA pathways. Inhibits GAP activity of MYO9B probably through competitive RhoA binding. The function in the nucleus remains to be determined. The polypeptide is Brefeldin A-inhibited guanine nucleotide-exchange protein 1 (Arfgef1) (Mus musculus (Mouse)).